We begin with the raw amino-acid sequence, 493 residues long: Stage V sporulation protein AF (493 aa).

The next 5 helical transmembrane spans lie at 296 to 316 (FFGI…VLQP), 334 to 354 (IPII…RMAA), 363 to 383 (TAMG…VGLF), 387 to 407 (VILY…YELS), and 418 to 438 (MILV…VLII).

This sequence belongs to the GerABKA family.

Its subcellular location is the cell membrane. This chain is Stage V sporulation protein AF (spoVAF), found in Bacillus subtilis (strain 168).